The primary structure comprises 313 residues: MTQPNEFKHISVLLDECIEALAIKPNGIYIDATFGRGGHSAHILDALGEKGRLIAFDRDPQAIKAAERFADDKRFSIIHSPFGDMAEEIEALGLTGKIDGVLMDLGVSSPQLDDAERGFSFLRDGPLDMRMDTSRGQSAADWLASAEEQDITQVIKEFGEEKFGKRIAHAIVNTRKDTPITRTAQLAKIIDEAVPVKDKFKHPATRAFQGIRIYINAELEQLRVGLKAATQVLAKEGRLAVISFHSLEDRLVKRFIKDQSKGKVVPHNLPITQAEIDADKVLKALGKAIKPSEQEIANNVRSRSSVLRVAEKL.

S-adenosyl-L-methionine is bound by residues 37 to 39 (GGH), aspartate 57, phenylalanine 82, aspartate 104, and glutamine 111.

The protein belongs to the methyltransferase superfamily. RsmH family.

It is found in the cytoplasm. The catalysed reaction is cytidine(1402) in 16S rRNA + S-adenosyl-L-methionine = N(4)-methylcytidine(1402) in 16S rRNA + S-adenosyl-L-homocysteine + H(+). Specifically methylates the N4 position of cytidine in position 1402 (C1402) of 16S rRNA. The polypeptide is Ribosomal RNA small subunit methyltransferase H (Alteromonas mediterranea (strain DSM 17117 / CIP 110805 / LMG 28347 / Deep ecotype)).